We begin with the raw amino-acid sequence, 190 residues long: CASP-like protein 1E1 (190 aa).

A disordered region spans residues 1-23 (MEHESKNKVDGMEMEKGKKESGS). Topologically, residues 1 to 28 (MEHESKNKVDGMEMEKGKKESGSRKGLE) are cytoplasmic. Residues 29 to 49 (LTMRVLALVLTMVAATVLGVA) traverse the membrane as a helical segment. Residues 50-83 (KQTKVVPIKLIPTLPPLNVSTTAKASYLSAFVYN) are Extracellular-facing. N67 carries N-linked (GlcNAc...) asparagine glycosylation. Residues 84 to 104 (ISANAIACGYTAISIVIVMIS) form a helical membrane-spanning segment. Residues 105–111 (KGKRSKS) are Cytoplasmic-facing. A helical membrane pass occupies residues 112-132 (LLMAVLIGDLMMVALLFSSTG). Residues 133 to 163 (AAGAIGLMGRHGNKHVMWKKVCGVFGKFCNQ) lie on the Extracellular side of the membrane. The helical transmembrane segment at 164–184 (AAVSVAITLIASVVFMLLVVL) threads the bilayer. Topologically, residues 185 to 190 (DALKLP) are cytoplasmic.

It belongs to the Casparian strip membrane proteins (CASP) family. Homodimer and heterodimers.

The protein localises to the cell membrane. The sequence is that of CASP-like protein 1E1 from Arabidopsis thaliana (Mouse-ear cress).